Here is a 96-residue protein sequence, read N- to C-terminus: Exodeoxyribonuclease 7 small subunit (96 aa).

Over residues 61–79 (ALTKDESQKTNKTGFRTES) the composition is skewed to basic and acidic residues. A disordered region spans residues 61–96 (ALTKDESQKTNKTGFRTESKSTSQTSSDSVLEEDLF). A compositionally biased stretch (low complexity) spans 80 to 89 (KSTSQTSSDS).

The protein belongs to the XseB family. Heterooligomer composed of large and small subunits.

The protein resides in the cytoplasm. It catalyses the reaction Exonucleolytic cleavage in either 5'- to 3'- or 3'- to 5'-direction to yield nucleoside 5'-phosphates.. In terms of biological role, bidirectionally degrades single-stranded DNA into large acid-insoluble oligonucleotides, which are then degraded further into small acid-soluble oligonucleotides. The sequence is that of Exodeoxyribonuclease 7 small subunit from Leptospira borgpetersenii serovar Hardjo-bovis (strain JB197).